Consider the following 219-residue polypeptide: 16S rRNA (adenine(1408)-N(1))-methyltransferase (219 aa).

S-adenosyl-L-methionine is bound by residues Gly-32, Asn-38, Asp-55, 87-88, 104-109, and 195-197; these read AE, LFPWGT, and SLW.

Belongs to the methyltransferase superfamily. Kanamycin-apramycin resistance family.

It carries out the reaction adenosine(1408) in 16S rRNA + S-adenosyl-L-methionine = N(1)-methyladenosine(1408) in 16S rRNA + S-adenosyl-L-homocysteine + H(+). Functionally, specifically methylates the N(1) position of adenine 1408 in 16S rRNA. Confers resistance to various aminoglycosides, including kanamycin, neomycin, apramycin, ribostamycin and gentamicin. Methylates only fully assembled 30S subunits. This Escherichia coli protein is 16S rRNA (adenine(1408)-N(1))-methyltransferase (npmA).